A 118-amino-acid polypeptide reads, in one-letter code: Phosphoribosyl-AMP cyclohydrolase (118 aa).

D87 is a binding site for Mg(2+). C88 lines the Zn(2+) pocket. Mg(2+) is bound by residues D89 and D91. The Zn(2+) site is built by C104 and C111.

The protein belongs to the PRA-CH family. In terms of assembly, homodimer. It depends on Mg(2+) as a cofactor. Zn(2+) is required as a cofactor.

The protein resides in the cytoplasm. It carries out the reaction 1-(5-phospho-beta-D-ribosyl)-5'-AMP + H2O = 1-(5-phospho-beta-D-ribosyl)-5-[(5-phospho-beta-D-ribosylamino)methylideneamino]imidazole-4-carboxamide. Its pathway is amino-acid biosynthesis; L-histidine biosynthesis; L-histidine from 5-phospho-alpha-D-ribose 1-diphosphate: step 3/9. In terms of biological role, catalyzes the hydrolysis of the adenine ring of phosphoribosyl-AMP. The polypeptide is Phosphoribosyl-AMP cyclohydrolase (Corynebacterium glutamicum (strain R)).